Reading from the N-terminus, the 219-residue chain is Vacuolar iron transporter homolog 2.1 (219 aa).

Residues 1 to 15 show a composition bias toward polar residues; that stretch reads MTSNVQLSETNSPRN. The interval 1–26 is disordered; it reads MTSNVQLSETNSPRNQKTRPRAEKEE. Threonine 2 is subject to N-acetylthreonine. Residues 2 to 37 are Cytoplasmic-facing; it reads TSNVQLSETNSPRNQKTRPRAEKEEVDYMQRAQWLR. The helical transmembrane segment at 38 to 58 threads the bilayer; the sequence is AALLGANDGLVTVASLMMGVG. Residues 59-67 lie on the Vacuolar side of the membrane; it reads SIKEDVKAM. A helical membrane pass occupies residues 68–88; that stretch reads LLVGFAGLVAGACSMAIGEFV. Topologically, residues 89–133 are cytoplasmic; sequence SVCTQRDIETAQMKRAIEHKTSLSAIDEQEEEEKKERLPNPGQAA. A helical membrane pass occupies residues 134–154; it reads IASALAFSVGAAMPLLGAVFI. Topologically, residues 155 to 161 are vacuolar; that stretch reads ENHKVRM. Residues 162-182 form a helical membrane-spanning segment; the sequence is VVVAVVATIALVVFGVTGAVL. At 183-193 the chain is on the cytoplasmic side; it reads GKTSVVKSSVR. A helical membrane pass occupies residues 194 to 214; it reads VVIGGWMAMALTFGLTKFIGS. At 215 to 219 the chain is on the vacuolar side; it reads AAMQI.

It belongs to the CCC1 family. As to expression, highly expressed in roots. inflorescences and at lower levels in leaves.

It localises to the vacuole membrane. It catalyses the reaction Fe(2+)(in) = Fe(2+)(out). Functionally, vacuolar iron transporter involved in the transfer of iron ions from the cytosol to the vacuole for intracellular iron storage. Involved in regulation of cellular iron homeostasis. Vacuolar iron storage is required for seed embryo and seedling development. The sequence is that of Vacuolar iron transporter homolog 2.1 from Arabidopsis thaliana (Mouse-ear cress).